Consider the following 213-residue polypeptide: NAD(P)H-hydrate epimerase (213 aa).

One can recognise a YjeF N-terminal domain in the interval 8–210 (MYNIEENGHA…KIGIPPEAEK (203 aa)). 55 to 59 (NNGGD) contributes to the (6S)-NADPHX binding site. Positions 56 and 122 each coordinate K(+). Residues 126 to 132 (GTGITGE), Tyr137, and Asp155 contribute to the (6S)-NADPHX site. Ser158 is a binding site for K(+).

It belongs to the NnrE/AIBP family. Requires K(+) as cofactor.

It carries out the reaction (6R)-NADHX = (6S)-NADHX. It catalyses the reaction (6R)-NADPHX = (6S)-NADPHX. Catalyzes the epimerization of the S- and R-forms of NAD(P)HX, a damaged form of NAD(P)H that is a result of enzymatic or heat-dependent hydration. This is a prerequisite for the S-specific NAD(P)H-hydrate dehydratase to allow the repair of both epimers of NAD(P)HX. This chain is NAD(P)H-hydrate epimerase, found in Cenarchaeum symbiosum (strain A).